A 100-amino-acid chain; its full sequence is Integration host factor subunit alpha (100 aa).

This sequence belongs to the bacterial histone-like protein family. As to quaternary structure, heterodimer of an alpha and a beta chain.

Functionally, this protein is one of the two subunits of integration host factor, a specific DNA-binding protein that functions in genetic recombination as well as in transcriptional and translational control. The sequence is that of Integration host factor subunit alpha from Ruegeria sp. (strain TM1040) (Silicibacter sp.).